We begin with the raw amino-acid sequence, 139 residues long: Probable cytochrome b5 (139 aa).

Residues 2 to 78 (SAEFTYQDVA…LEPLLVGTLK (77 aa)) enclose the Cytochrome b5 heme-binding domain. The heme site is built by H37 and H61. A helical transmembrane segment spans residues 105–125 (GLGIGLYAVLVLGGLAGFAAY).

It belongs to the cytochrome b5 family.

The protein resides in the endoplasmic reticulum membrane. It is found in the microsome membrane. Its function is as follows. Membrane bound hemoprotein which function as an electron carrier for several membrane bound oxygenases. In Neurospora crassa (strain ATCC 24698 / 74-OR23-1A / CBS 708.71 / DSM 1257 / FGSC 987), this protein is Probable cytochrome b5.